The primary structure comprises 796 residues: Putative aconitate hydratase, mitochondrial (796 aa).

The transit peptide at 1 to 28 directs the protein to the mitochondrion; that stretch reads MLRQIVSQRSAARRQLIDQLAPCLRRGL. Residues glutamine 108 and 201-203 each bind substrate; that span reads DSH. 3 residues coordinate [4Fe-4S] cluster: cysteine 399, cysteine 462, and cysteine 465. Residues arginine 489 and arginine 494 each coordinate substrate. The interval 540–569 is disordered; the sequence is EPPTGQDLPSKGFEAGNPAFQPSAPVPDSS. 685-686 is a binding site for substrate; that stretch reads AR.

It belongs to the aconitase/IPM isomerase family.

Its subcellular location is the mitochondrion. Its function is as follows. Has no detectable activity towards cis-acontiate or cis-homoaconitate. The chain is Putative aconitate hydratase, mitochondrial (acoB) from Emericella nidulans (strain FGSC A4 / ATCC 38163 / CBS 112.46 / NRRL 194 / M139) (Aspergillus nidulans).